The sequence spans 280 residues: Virginiamycin B lyase (280 aa).

H215 contacts substrate. E254 contributes to the Mg(2+) binding site. H256 serves as the catalytic Proton acceptor. Residue E271 participates in Mg(2+) binding.

Belongs to the Vgb family. Monomer. Requires Mg(2+) as cofactor.

In terms of biological role, inactivates the type B streptogramin antibiotics by linearizing the lactone ring at the ester linkage, generating a free phenylglycine carboxylate and converting the threonyl moiety into 2-amino-butenoic acid. The polypeptide is Virginiamycin B lyase (Mycobacterium sp. (strain JLS)).